The primary structure comprises 81 residues: MASNEEILAGLAEIVNEETGLAPEAVELDKSFTDDLDIDSISMMTIVVNAEEKFGVRIPDEEVKNLKTVGDAVSYIASAQA.

One can recognise a Carrier domain in the interval 2-80 (ASNEEILAGL…DAVSYIASAQ (79 aa)). The residue at position 40 (serine 40) is an O-(pantetheine 4'-phosphoryl)serine.

This sequence belongs to the acyl carrier protein (ACP) family. In terms of processing, 4'-phosphopantetheine is transferred from CoA to a specific serine of apo-ACP by AcpS. This modification is essential for activity because fatty acids are bound in thioester linkage to the sulfhydryl of the prosthetic group.

It is found in the cytoplasm. It participates in lipid metabolism; fatty acid biosynthesis. Carrier of the growing fatty acid chain in fatty acid biosynthesis. The protein is Acyl carrier protein of Renibacterium salmoninarum (strain ATCC 33209 / DSM 20767 / JCM 11484 / NBRC 15589 / NCIMB 2235).